Here is a 452-residue protein sequence, read N- to C-terminus: Pup--protein ligase (452 aa).

Position 9 (E9) interacts with Mg(2+). R53 serves as a coordination point for ATP. Y55 is a binding site for Mg(2+). D57 serves as the catalytic Proton acceptor. E63 lines the Mg(2+) pocket. Residues T66 and W419 each contribute to the ATP site.

It belongs to the Pup ligase/Pup deamidase family. Pup-conjugating enzyme subfamily.

It carries out the reaction ATP + [prokaryotic ubiquitin-like protein]-L-glutamate + [protein]-L-lysine = ADP + phosphate + N(6)-([prokaryotic ubiquitin-like protein]-gamma-L-glutamyl)-[protein]-L-lysine.. The protein operates within protein degradation; proteasomal Pup-dependent pathway. It participates in protein modification; protein pupylation. Catalyzes the covalent attachment of the prokaryotic ubiquitin-like protein modifier Pup to the proteasomal substrate proteins, thereby targeting them for proteasomal degradation. This tagging system is termed pupylation. The ligation reaction involves the side-chain carboxylate of the C-terminal glutamate of Pup and the side-chain amino group of a substrate lysine. The protein is Pup--protein ligase of Nocardia farcinica (strain IFM 10152).